Here is an 875-residue protein sequence, read N- to C-terminus: Alanine--tRNA ligase (875 aa).

H564, H568, C666, and H670 together coordinate Zn(2+).

It belongs to the class-II aminoacyl-tRNA synthetase family. In terms of assembly, homotetramer. It depends on Zn(2+) as a cofactor.

It localises to the cytoplasm. It catalyses the reaction tRNA(Ala) + L-alanine + ATP = L-alanyl-tRNA(Ala) + AMP + diphosphate. In terms of biological role, catalyzes the attachment of alanine to tRNA(Ala) in a two-step reaction: alanine is first activated by ATP to form Ala-AMP and then transferred to the acceptor end of tRNA(Ala). Also edits incorrectly charged Ser-tRNA(Ala) and Gly-tRNA(Ala) via its editing domain. The polypeptide is Alanine--tRNA ligase (Serratia proteamaculans (strain 568)).